The sequence spans 272 residues: MSPPLEPHDYIGLSAAAASPTPSSSSCSSSPNPGGEARGPRLTLRLGLPGSESPEREVVAAGLTLGPLPPTTTKAASKRAFPDSSPRHGASSGSVAAAAAACQDKAAPAAAPPAAKAQVVGWPPVRNYRKNTLAASASKGKGEDKGTAEGGPLYVKVSMDGAPYLRKVDLKMYSSYEDLSMALEKMFSCFITGQSGLRKSSNRDRLTNGSKADALQDQEYVLTYEDKDADWMLVGDLPWDLFTTICRKLKIMRGSDAAGIAPRSIEQSGQSR.

Positions 1–92 (MSPPLEPHDY…DSSPRHGASS (92 aa)) are disordered. 2 stretches are compositionally biased toward low complexity: residues 14-33 (SAAAASPTPSSSSCSSSPNP) and 40-50 (PRLTLRLGLPG). The EAR-like (transcriptional repression) signature appears at 44–48 (LRLGL). The 105-residue stretch at 152 to 256 (PLYVKVSMDG…RKLKIMRGSD (105 aa)) folds into the PB1 domain.

The protein belongs to the Aux/IAA family. Homodimers and heterodimers. Highly expressed in roots and flowers. Expressed in shoots.

It is found in the nucleus. Aux/IAA proteins are short-lived transcriptional factors that function as repressors of early auxin response genes at low auxin concentrations. This Oryza sativa subsp. indica (Rice) protein is Auxin-responsive protein IAA5 (IAA5).